The primary structure comprises 409 residues: Elongation factor Tu (409 aa).

The region spanning 10-214 (KPHVNIGTIG…AVDDNIPEPE (205 aa)) is the tr-type G domain. Residues 19 to 26 (GHVDHGKT) form a G1 region. 19-26 (GHVDHGKT) provides a ligand contact to GTP. Thr26 provides a ligand contact to Mg(2+). Positions 60 to 64 (GITIN) are G2. The G3 stretch occupies residues 81–84 (DCPG). GTP contacts are provided by residues 81–85 (DCPGH) and 136–139 (NKKD). The G4 stretch occupies residues 136 to 139 (NKKD). Positions 174 to 176 (SAL) are G5.

This sequence belongs to the TRAFAC class translation factor GTPase superfamily. Classic translation factor GTPase family. EF-Tu/EF-1A subfamily. As to quaternary structure, monomer.

Its subcellular location is the cytoplasm. It carries out the reaction GTP + H2O = GDP + phosphate + H(+). Its function is as follows. GTP hydrolase that promotes the GTP-dependent binding of aminoacyl-tRNA to the A-site of ribosomes during protein biosynthesis. This is Elongation factor Tu from Crocosphaera subtropica (strain ATCC 51142 / BH68) (Cyanothece sp. (strain ATCC 51142)).